A 118-amino-acid chain; its full sequence is Small ribosomal subunit protein uS13 (118 aa).

The segment at 94-118 is disordered; the sequence is GLPVRGQRTKTNARTRKGPRKPIKK.

The protein belongs to the universal ribosomal protein uS13 family. In terms of assembly, part of the 30S ribosomal subunit. Forms a loose heterodimer with protein S19. Forms two bridges to the 50S subunit in the 70S ribosome.

Functionally, located at the top of the head of the 30S subunit, it contacts several helices of the 16S rRNA. In the 70S ribosome it contacts the 23S rRNA (bridge B1a) and protein L5 of the 50S subunit (bridge B1b), connecting the 2 subunits; these bridges are implicated in subunit movement. Contacts the tRNAs in the A and P-sites. This chain is Small ribosomal subunit protein uS13, found in Erwinia tasmaniensis (strain DSM 17950 / CFBP 7177 / CIP 109463 / NCPPB 4357 / Et1/99).